We begin with the raw amino-acid sequence, 197 residues long: Recombination protein RecR (197 aa).

Residues 56-71 form a C4-type zinc finger; the sequence is CQQCRNLSETEICGFC. Positions 79–174 constitute a Toprim domain; that stretch reads DQLCIVETPT…SVTRLAQGIP (96 aa).

It belongs to the RecR family.

Its function is as follows. May play a role in DNA repair. It seems to be involved in an RecBC-independent recombinational process of DNA repair. It may act with RecF and RecO. The sequence is that of Recombination protein RecR from Hydrogenovibrio crunogenus (strain DSM 25203 / XCL-2) (Thiomicrospira crunogena).